The sequence spans 448 residues: Phosphoglucosamine mutase (448 aa).

S100 (phosphoserine intermediate) is an active-site residue. Mg(2+)-binding residues include S100, D240, D242, and D244. At S100 the chain carries Phosphoserine.

Belongs to the phosphohexose mutase family. Mg(2+) serves as cofactor. Post-translationally, activated by phosphorylation.

It carries out the reaction alpha-D-glucosamine 1-phosphate = D-glucosamine 6-phosphate. Its function is as follows. Catalyzes the conversion of glucosamine-6-phosphate to glucosamine-1-phosphate. This Alkaliphilus metalliredigens (strain QYMF) protein is Phosphoglucosamine mutase.